Reading from the N-terminus, the 179-residue chain is ATP synthase subunit delta (179 aa).

The protein belongs to the ATPase delta chain family. In terms of assembly, F-type ATPases have 2 components, F(1) - the catalytic core - and F(0) - the membrane proton channel. F(1) has five subunits: alpha(3), beta(3), gamma(1), delta(1), epsilon(1). F(0) has three main subunits: a(1), b(2) and c(10-14). The alpha and beta chains form an alternating ring which encloses part of the gamma chain. F(1) is attached to F(0) by a central stalk formed by the gamma and epsilon chains, while a peripheral stalk is formed by the delta and b chains.

Its subcellular location is the cell inner membrane. Its function is as follows. F(1)F(0) ATP synthase produces ATP from ADP in the presence of a proton or sodium gradient. F-type ATPases consist of two structural domains, F(1) containing the extramembraneous catalytic core and F(0) containing the membrane proton channel, linked together by a central stalk and a peripheral stalk. During catalysis, ATP synthesis in the catalytic domain of F(1) is coupled via a rotary mechanism of the central stalk subunits to proton translocation. This protein is part of the stalk that links CF(0) to CF(1). It either transmits conformational changes from CF(0) to CF(1) or is implicated in proton conduction. The sequence is that of ATP synthase subunit delta from Burkholderia mallei (strain SAVP1).